The sequence spans 287 residues: Large ribosomal subunit protein uL2 (287 aa).

Positions 221–287 (RGSVMNPCDH…SKRSRGGRDS (67 aa)) are disordered. A compositionally biased stretch (basic residues) spans 271–287 (LRKRRKTSKRSRGGRDS).

It belongs to the universal ribosomal protein uL2 family. In terms of assembly, part of the 50S ribosomal subunit. Forms a bridge to the 30S subunit in the 70S ribosome.

Its function is as follows. One of the primary rRNA binding proteins. Required for association of the 30S and 50S subunits to form the 70S ribosome, for tRNA binding and peptide bond formation. It has been suggested to have peptidyltransferase activity; this is somewhat controversial. Makes several contacts with the 16S rRNA in the 70S ribosome. The protein is Large ribosomal subunit protein uL2 of Synechococcus sp. (strain CC9605).